Reading from the N-terminus, the 333-residue chain is Trimethylamine N-oxide-binding protein (333 aa).

The signal sequence occupies residues 1–42 (MRLFREIAANDPGPTGRMKNMKTFTTALATGVLALCPLAALA). The trimethylamine N-oxide site is built by W55, W102, E131, W177, and W222. The Ca(2+) site is built by P249, V251, N254, A257, and D260.

The complex is probably composed of two ATP-binding proteins (TmoW), two transmembrane proteins (TmoV) and a solute-binding protein (TmoX). Monomer in solution, but forms homodimers in crystals.

It localises to the periplasm. With respect to regulation, binds a Ca(2+) ion, which has little effect on either the binding affinity or the secondary structure, but plays an important role in maintaining the stability of TmoX. It may modulate the protein stability in response to biological needs and environmental changes. Thermostability is dramatically decreased when Ca(2+) is removed by EDTA. Its function is as follows. Part of the ABC transporter complex TmoXWV involved in trimethylamine N-oxide (TMAO) import. Is specific for TMAO and essential for TMAO metabolism. Binds TMAO with high affinity. In vitro, also presents a high binding affinity for choline, however this transporter seems specific for TMAO and the choline-binding affinity presented by recombinant TmoX may not make physiological sense. This is Trimethylamine N-oxide-binding protein from Ruegeria pomeroyi (strain ATCC 700808 / DSM 15171 / DSS-3) (Silicibacter pomeroyi).